A 78-amino-acid chain; its full sequence is Small integral membrane protein 1 (78 aa).

M1 bears the N-acetylmethionine mark. The segment at 1 to 22 (MQSQESGVHYSRWDSSSRDEVS) is disordered. The Cytoplasmic portion of the chain corresponds to 1–48 (MQSQESGVHYSRWDSSSRDEVSMTAMSSSEEASCYRRISQKLCSGKLG). 4 positions are modified to phosphoserine: S6, S17, S22, and S27. Residues 11–21 (SRWDSSSRDEV) show a composition bias toward basic and acidic residues. Residues 49–69 (IAMKVLGGVALFWIIFILGYI) traverse the membrane as a helical; Signal-anchor for type II membrane protein segment. The Extracellular segment spans residues 70–78 (TGYYVHKCK).

The protein belongs to the SMIM1 family. As to quaternary structure, homooligomer; disulfide-linked.

The protein localises to the cell membrane. Functionally, regulator of red blood cell formation. In Mus musculus (Mouse), this protein is Small integral membrane protein 1.